A 952-amino-acid polypeptide reads, in one-letter code: Bromodomain testis-specific protein (952 aa).

The region spanning 26–132 (RLTNQLQFLQ…KLFMQKLSQM (107 aa)) is the Bromo 1 domain. Over residues 141–150 (GKERMKKDIQ) the composition is skewed to basic and acidic residues. The disordered stretch occupies residues 141–168 (GKERMKKDIQQKTAVSSAKEQTPSKSAE). Residues 151-167 (QKTAVSSAKEQTPSKSA) are compositionally biased toward polar residues. Serine 186 carries the post-translational modification Phosphoserine. The Nuclear localization signal signature appears at 208–219 (KGVKRRADTTTP). The interval 209 to 257 (GVKRRADTTTPTTSSAKASSESPPPLREAKPANAPVKENTVKSVLPDSQ) is disordered. A compositionally biased stretch (low complexity) spans 216 to 229 (TTTPTTSSAKASSE). A Bromo 2 domain is found at 266-375 (VKVTEQLKHC…DVFEMHFAKI (110 aa)). Disordered regions lie at residues 392-420 (SAKALSRESSSEASSGDCSSEDSEDERVQ), 442-504 (VPLR…NAKP), 607-746 (QLNC…GCQV), and 850-930 (KHLE…RREA). Residues 417–442 (ERVQRLAKLQEQLNAVHQQLQVLSQV) are a coiled coil. Positions 445-463 (RKLKKKNEKSKRAPKRKKV) are enriched in basic residues. In terms of domain architecture, NET spans 495–577 (KLEEEDNAKP…ACLRKRSLKP (83 aa)). Positions 610–619 (CRKRQTKRPA) are enriched in basic residues. Pro residues predominate over residues 625-638 (PRPPLPPPPPPPPE). The segment covering 646–681 (SDSSSSSSSSGSGSSSSSSSSSGSGSSSSDSSSSDS) has biased composition (low complexity). Polar residues predominate over residues 718–729 (SAETALVQQSTG). Residues 837–936 (EKEVKARTQE…RREAMAGTID (100 aa)) are a coiled coil. A compositionally biased stretch (basic and acidic residues) spans 850-867 (KHLEHSAKDPKVSQESQR). The span at 874–883 (TPESSSNKVQ) shows a compositional bias: polar residues. A compositionally biased stretch (low complexity) spans 893-902 (EQQQLPSPSE). The span at 911 to 930 (LLKDRNLAREKEQERRRREA) shows a compositional bias: basic and acidic residues.

This sequence belongs to the BET family. In terms of assembly, interacts with the acetylated N-terminus of histone H1, H2, H3 and H4. Interacts with P-TEFb components CDK9 and CCNT1/cyclin-T1. Interacts with mRNA splicing machinery proteins SRSF2, DDX5, HNRNPK and TARDBP. Interacts with SMARCE1. In terms of processing, ubiquitinated in a SPOP-dependent manner, leading to proteasomal degradation.

The protein localises to the nucleus. Testis-specific chromatin protein that specifically binds histone H4 acetylated at 'Lys-5' and 'Lys-8' (H4K5ac and H4K8ac, respectively) and plays a key role in spermatogenesis. Required in late pachytene spermatocytes: plays a role in meiotic and post-meiotic cells by binding to acetylated histones at the promoter of specific meiotic and post-meiotic genes, facilitating their activation at the appropriate time. In the post-meiotic phase of spermatogenesis, binds to hyperacetylated histones and participates in their general removal from DNA. Also recognizes and binds a subset of butyrylated histones: able to bind histone H4 butyrylated at 'Lys-8' (H4K8ac), while it is not able to bind H4 butyrylated at 'Lys-5' (H4K5ac). Also acts as a component of the splicing machinery in pachytene spermatocytes and round spermatids and participates in 3'-UTR truncation of specific mRNAs in post-meiotic spermatids. Required for chromocenter organization, a structure comprised of peri-centromeric heterochromatin. In Rattus norvegicus (Rat), this protein is Bromodomain testis-specific protein (Brdt).